Reading from the N-terminus, the 104-residue chain is MSGGDDLVLHNPVEDGELSAIFMIRNPSGIHVRPAGTIVKLFDGEDCEATFTYLGKTVNARSVMSILMLGASYNGEITVRIKGPSASRVMQKLAEVFNSGFGEL.

The HPr domain occupies 17-104 (ELSAIFMIRN…EVFNSGFGEL (88 aa)). His-31 functions as the Pros-phosphohistidine intermediate in the catalytic mechanism.

It belongs to the HPr family.

It is found in the cytoplasm. General (non sugar-specific) component of the phosphoenolpyruvate-dependent sugar phosphotransferase system (sugar PTS). This major carbohydrate active-transport system catalyzes the phosphorylation of incoming sugar substrates concomitantly with their translocation across the cell membrane. The phosphoryl group from phosphoenolpyruvate (PEP) is transferred to the phosphoryl carrier protein HPr by enzyme I. Phospho-HPr then transfers it to the PTS EIIA domain. This Chlamydia muridarum (strain MoPn / Nigg) protein is Phosphocarrier protein HPr (ptsH).